The chain runs to 158 residues: UPF0735 ACT domain-containing protein Bsph_3944 (158 aa).

The ACT domain maps to 80–155; sequence TVFLQLQDRK…FVESAEVISS (76 aa).

Belongs to the UPF0735 family.

The chain is UPF0735 ACT domain-containing protein Bsph_3944 from Lysinibacillus sphaericus (strain C3-41).